Consider the following 44-residue polypeptide: Antibacterial protein 3 (44 aa).

An N-formylmethionine modification is found at methionine 1.

Belongs to the staphylococcal hemolytic protein family.

Its subcellular location is the secreted. In terms of biological role, has hemolytic activity and also inhibits the growth of gonococci. The chain is Antibacterial protein 3 from Staphylococcus haemolyticus.